We begin with the raw amino-acid sequence, 442 residues long: MSSMTPREIVQELDKHIIGQDSAKRAVAIALRNRWRRMQIDEGLREEVTPKNILMIGPTGVGKTEIARRLAKLADAPFIKVEATKFTEVGYVGRDVESIIRDLADMAIKLLREKEMTKVENRALDAAEERILDALLPPARSFNSDAPVEKESAARQVFRKKLREGTLDDKEIDIEIKATPVGVEIMAPPGMEEMTSQLQSMFSNMSGDRKRTKRMKVAEAMKKVKDEEAAKLVNEEEIKQRALRAVEENGIVFIDEIDKVAKRSETSSADVSREGVQRDLLPLIEGCTVSTKFGMLKTDHILFIASGAFHLAKPSDLIPELQGRLPIRVELDALSPSDFQRILTEPNASLTEQYVALMKTEGVDISFSEGAIQRIAEIAWKVNEKTENIGARRLHTVMEKLLEEVSFAAGDKIRDSFEVTAEYVDKCLGELSEDEDLSRYIL.

ATP-binding positions include Ile-18, 60–65 (GVGKTE), Asp-255, Glu-320, and Arg-392.

Belongs to the ClpX chaperone family. HslU subfamily. In terms of assembly, a double ring-shaped homohexamer of HslV is capped on each side by a ring-shaped HslU homohexamer. The assembly of the HslU/HslV complex is dependent on binding of ATP.

It localises to the cytoplasm. ATPase subunit of a proteasome-like degradation complex; this subunit has chaperone activity. The binding of ATP and its subsequent hydrolysis by HslU are essential for unfolding of protein substrates subsequently hydrolyzed by HslV. HslU recognizes the N-terminal part of its protein substrates and unfolds these before they are guided to HslV for hydrolysis. The sequence is that of ATP-dependent protease ATPase subunit HslU from Hahella chejuensis (strain KCTC 2396).